We begin with the raw amino-acid sequence, 594 residues long: RING finger protein 207 (594 aa).

An RING-type zinc finger spans residues 25–64 (CPLCHAQYERPCLLDCFHDFCAGCLRGRTADGRVACPLCQ). The B box-type; atypical zinc finger occupies 93 to 145 (VEAVHCANCDLDCSKQDAETACFCNTCGQPLCARCRDETHRARMFARHDIVAL). The Zn(2+) site is built by Cys-98, Cys-101, Cys-127, and His-132. Positions 369–400 (NTLAGGSGPKVLMGPSCPSPVRKVSRSPVQKP) are disordered. Positions 424 to 458 (CRHYEDSYRGLQAEVQNLKDQVQELHRDLTKHHSL) form a coiled coil. Residues 552–594 (FQASADDESENPQTAYDASRNGETPASLLLPGSVASAEPPFVN) are disordered. Over residues 562–575 (NPQTAYDASRNGET) the composition is skewed to polar residues.

Interacts with the core-glycosylated, but not the fully glycosylated form of KCNH2/HERG. Interacts with DNAJA1 and HSPA8. Interacts (via the C-terminus) with HSPA1A; this interaction additively increases KCNH2 expression.

The protein resides in the cytoplasm. Plays a role in cardiac repolarization possibly by stabilizing membrane expression of the potassium channel KCNH2/HERG, or by assisting its synthesis, folding or export from the endoplasmic reticulum, in a heat shock protein-dependent manner. In Oryctolagus cuniculus (Rabbit), this protein is RING finger protein 207 (RNF207).